The sequence spans 364 residues: RNA polymerase II holoenzyme cyclin-like subunit (364 aa).

Residues 53 to 143 (QQINRLSKRI…VGECEFSLIS (91 aa)) enclose the Cyclin N-terminal domain. The disordered stretch occupies residues 268 to 303 (PGFGSQGSQQQAGFSQGNSQGSLQGDSAAAEPKKVT). Positions 273–289 (QGSQQQAGFSQGNSQGS) are enriched in low complexity.

The protein belongs to the cyclin family. Cyclin C subfamily. Component of the SRB8-11 complex, a regulatory module of the Mediator complex.

It is found in the nucleus. Its function is as follows. Component of the SRB8-11 complex. The SRB8-11 complex is a regulatory module of the Mediator complex which is itself involved in regulation of basal and activated RNA polymerase II-dependent transcription. The SRB8-11 complex may be involved in the transcriptional repression of a subset of genes regulated by Mediator. It may inhibit the association of the Mediator complex with RNA polymerase II to form the holoenzyme complex. The SRB8-11 complex phosphorylates the C-terminal domain (CTD) of the largest subunit of RNA polymerase II. The protein is RNA polymerase II holoenzyme cyclin-like subunit (SSN8) of Chaetomium globosum (strain ATCC 6205 / CBS 148.51 / DSM 1962 / NBRC 6347 / NRRL 1970) (Soil fungus).